The chain runs to 66 residues: Large ribosomal subunit protein bL35 (66 aa).

Residues 1–22 form a disordered region; sequence MAYKLKSHRGAAKRFKKTASGG.

This sequence belongs to the bacterial ribosomal protein bL35 family.

This is Large ribosomal subunit protein bL35 from Pseudoalteromonas translucida (strain TAC 125).